The sequence spans 264 residues: S-methyl-5'-thioadenosine phosphorylase (264 aa).

Phosphate is bound by residues Ser-14 and 55–56 (RH). Met-180 is a substrate binding site. Residue Thr-181 participates in phosphate binding. 204-206 (DVD) lines the substrate pocket.

This sequence belongs to the PNP/MTAP phosphorylase family. MTAP subfamily. In terms of assembly, homodimer.

The catalysed reaction is S-methyl-5'-thioadenosine + phosphate = 5-(methylsulfanyl)-alpha-D-ribose 1-phosphate + adenine. It functions in the pathway amino-acid biosynthesis; L-methionine biosynthesis via salvage pathway; S-methyl-5-thio-alpha-D-ribose 1-phosphate from S-methyl-5'-thioadenosine (phosphorylase route): step 1/1. Its activity is regulated as follows. Not inhibited by adenosine, potently inhibited by MT-DADMe-immucillin A. Catalyzes the reversible phosphorylation of S-methyl-5'-thioadenosine (MTA) to adenine and 5-methylthioribose-1-phosphate. Involved in the breakdown of MTA, a major by-product of polyamine biosynthesis. Responsible for the first step in the methionine salvage pathway after MTA has been generated from S-adenosylmethionine. Prefers MTA, with 2% activity on adenosine, 0.8% activity on S-adenosyl-L-homocysteine and no activity on other tested nucleosides. The chain is S-methyl-5'-thioadenosine phosphorylase from Mycobacterium tuberculosis (strain ATCC 25618 / H37Rv).